Here is an 881-residue protein sequence, read N- to C-terminus: Valine--tRNA ligase (881 aa).

A 'HIGH' region motif is present at residues Pro49 to His59. The short motif at Lys526–Ser530 is the 'KMSKS' region element. Residue Lys529 coordinates ATP. Residues Leu810 to Lys881 are a coiled coil.

This sequence belongs to the class-I aminoacyl-tRNA synthetase family. ValS type 1 subfamily. In terms of assembly, monomer.

Its subcellular location is the cytoplasm. It catalyses the reaction tRNA(Val) + L-valine + ATP = L-valyl-tRNA(Val) + AMP + diphosphate. Catalyzes the attachment of valine to tRNA(Val). As ValRS can inadvertently accommodate and process structurally similar amino acids such as threonine, to avoid such errors, it has a 'posttransfer' editing activity that hydrolyzes mischarged Thr-tRNA(Val) in a tRNA-dependent manner. The polypeptide is Valine--tRNA ligase (Bacillus cereus (strain ATCC 10987 / NRS 248)).